Reading from the N-terminus, the 284-residue chain is Tropomyosin Tod p 1.0102 (284 aa).

Residues 15 to 273 (KEVATDKAEQ…KERYKSISDE (259 aa)) adopt a coiled-coil conformation. The segment at 103 to 136 (EERLTSAQSKLEDASKAADESERGRKVLENRSQG) is disordered.

This sequence belongs to the tropomyosin family. In terms of assembly, homodimer. The N-terminus is blocked. Expressed in mantle muscle (at protein level).

Its function is as follows. Tropomyosin, in association with the troponin complex, plays a central role in the calcium dependent regulation of muscle contraction. The sequence is that of Tropomyosin Tod p 1.0102 from Todarodes pacificus (Japanese flying squid).